The following is a 238-amino-acid chain: Small ribosomal subunit protein uS2 (238 aa).

This sequence belongs to the universal ribosomal protein uS2 family.

The polypeptide is Small ribosomal subunit protein uS2 (Synechococcus sp. (strain CC9311)).